A 300-amino-acid chain; its full sequence is Merozoite surface protein 2 (300 aa).

The first 20 residues, 1-20 (MKVIKTLSIINFFIFVTFNI), serve as a signal peptide directing secretion. Residues Asn-22 and Asn-36 are each glycosylated (N-linked (GlcNAc...) asparagine). The interval 44–226 (EESKPPTGAV…EQTESPELQS (183 aa)) is polymorphic region. One copy of the 1; inverted repeat lies at 51–58 (GAVAGSGA). The interval 51–110 (GAVAGSGAGAGSGAGAVAGSGAGAVAGSGAGAVAGSGAGAVAGSGAGAVAGSGAVAGSGA) is 7 X 8 AA tandem repeats of G-S-G-A-G-A-V-A. Repeat copies occupy residues 61–68 (GSGAGAVA), 69–76 (GSGAGAVA), 77–84 (GSGAGAVA), 85–92 (GSGAGAVA), and 93–100 (GSGAGAVA). The stretch at 103–110 (GAVAGSGA) is one 7; inverted repeat. The interval 111–261 (GNGANPGADA…DSQKECTDGN (151 aa)) is disordered. Low complexity predominate over residues 123-148 (SPSTPATTTTTTTTNDAEASTSTSSE). The span at 149-165 (NRNHNNAETNPKGKGEV) shows a compositional bias: basic and acidic residues. 2 stretches are compositionally biased toward polar residues: residues 167 to 193 (KPNQ…NVPR) and 200 to 228 (KSPT…QSAP). Asn-177 carries an N-linked (GlcNAc...) asparagine glycan. Asn-249 is a glycosylation site (N-linked (GlcNAc...) asparagine). Cys-257 and Cys-265 are disulfide-bonded. N-linked (GlcNAc...) asparagine glycans are attached at residues Asn-273 and Asn-274. Asn-274 carries the GPI-anchor amidated asparagine lipid modification. Residues 275-300 (SSNIASINKFVVLISATLVLSFAIFI) constitute a propeptide, removed in mature form.

The protein localises to the cell membrane. In terms of biological role, may play a role in the merozoite attachment to the erythrocyte. The sequence is that of Merozoite surface protein 2 from Plasmodium falciparum (isolate imr143).